We begin with the raw amino-acid sequence, 103 residues long: Pyrimidine/purine nucleoside phosphorylase (103 aa).

It belongs to the nucleoside phosphorylase PpnP family.

The enzyme catalyses a purine D-ribonucleoside + phosphate = a purine nucleobase + alpha-D-ribose 1-phosphate. The catalysed reaction is adenosine + phosphate = alpha-D-ribose 1-phosphate + adenine. It carries out the reaction cytidine + phosphate = cytosine + alpha-D-ribose 1-phosphate. It catalyses the reaction guanosine + phosphate = alpha-D-ribose 1-phosphate + guanine. The enzyme catalyses inosine + phosphate = alpha-D-ribose 1-phosphate + hypoxanthine. The catalysed reaction is thymidine + phosphate = 2-deoxy-alpha-D-ribose 1-phosphate + thymine. It carries out the reaction uridine + phosphate = alpha-D-ribose 1-phosphate + uracil. It catalyses the reaction xanthosine + phosphate = alpha-D-ribose 1-phosphate + xanthine. Its function is as follows. Catalyzes the phosphorolysis of diverse nucleosides, yielding D-ribose 1-phosphate and the respective free bases. Can use uridine, adenosine, guanosine, cytidine, thymidine, inosine and xanthosine as substrates. Also catalyzes the reverse reactions. In Methylobacillus flagellatus (strain ATCC 51484 / DSM 6875 / VKM B-1610 / KT), this protein is Pyrimidine/purine nucleoside phosphorylase.